Reading from the N-terminus, the 373-residue chain is Glutamine synthetase (373 aa).

Ala2 is modified (N-acetylalanine). A required for glutamine-induced ubiquitination by CRL4(CRBN) and proteasomal degradation region spans residues 2–25; it reads ATSASSHLNKGIKQMYMSLPQGEK. Lys11 and Lys14 each carry N6-acetyllysine. The 83-residue stretch at 24 to 106 folds into the GS beta-grasp domain; it reads EKVQAMYIWV…VLCEVFKYNR (83 aa). Tyr104 carries the phosphotyrosine modification. In terms of domain architecture, GS catalytic spans 113–373; the sequence is LRHICKRIMD…TGDEPFQYKN (261 aa). Glu134 contributes to the ATP binding site. Mn(2+)-binding residues include Glu134, Glu136, Glu196, and Glu203. An ATP-binding site is contributed by 203 to 208; the sequence is EFQIGP. Residue 246–247 participates in L-glutamate binding; the sequence is NW. His253 is a Mn(2+) binding site. Residues 255-257, Arg319, and Arg324 contribute to the ATP site; that span reads NFS. Arg319 serves as a coordination point for L-glutamate. 336–338 contacts ADP; it reads YFE. Glu338 provides a ligand contact to Mn(2+). L-glutamate is bound at residue Arg340. Phosphoserine is present on Ser343.

The protein belongs to the glutamine synthetase family. As to quaternary structure, decamer; composed of two pentamers. Interacts with PALMD. Interacts with RHOJ. Interacts with BEST2; this interaction tethers a fraction of GLUL to the membrane, causing a decrease of cytosolic glutamine synthase (GS) activity and inhibits the chloride channel activity of BEST2 by affecting the gating at the aperture in the absence of intracellular glutamate. Mg(2+) serves as cofactor. The cofactor is Mn(2+). Post-translationally, acetylated by EP300/p300; acetylation is stimulated by increased glutamine levels and promotes ubiquitin-mediated proteasomal degradation. In terms of processing, palmitoylated; undergoes autopalmitoylation. Ubiquitinated by ZNRF1. Ubiquitinated by the DCX (DDB1-CUL4-X-box) E3 ubiquitin-protein ligase complex called CRL4(CRBN), leading to proteasomal degradation. As to expression, expressed in microvascular endothelial cells.

The protein resides in the cytoplasm. Its subcellular location is the cytosol. The protein localises to the microsome. It localises to the mitochondrion. It is found in the cell membrane. It catalyses the reaction L-glutamate + NH4(+) + ATP = L-glutamine + ADP + phosphate + H(+). The enzyme catalyses L-cysteinyl-[protein] + hexadecanoyl-CoA = S-hexadecanoyl-L-cysteinyl-[protein] + CoA. With respect to regulation, glutamine synthetase activity is inhibited by methionine sulfoximine (MSO). Glutamine synthetase that catalyzes the ATP-dependent conversion of glutamate and ammonia to glutamine. Its role depends on tissue localization: in the brain, it regulates the levels of toxic ammonia and converts neurotoxic glutamate to harmless glutamine, whereas in the liver, it is one of the enzymes responsible for the removal of ammonia. Plays a key role in ammonium detoxification during erythropoiesis: the glutamine synthetase activity is required to remove ammonium generated by porphobilinogen deaminase (HMBS) during heme biosynthesis to prevent ammonium accumulation and oxidative stress. Essential for proliferation of fetal skin fibroblasts. Independently of its glutamine synthetase activity, required for endothelial cell migration during vascular development. Involved in angiogenesis by regulating membrane localization and activation of the GTPase RHOJ, possibly by promoting RHOJ palmitoylation. May act as a palmitoyltransferase for RHOJ: able to autopalmitoylate and then transfer the palmitoyl group to RHOJ. Plays a role in ribosomal 40S subunit biogenesis. Through the interaction with BEST2, inhibits BEST2 channel activity by affecting the gating at the aperture in the absence of intracellular L-glutamate, but sensitizes BEST2 to intracellular L-glutamate, which promotes the opening of BEST2 and thus relieves its inhibitory effect on BEST2. The protein is Glutamine synthetase of Mus musculus (Mouse).